The primary structure comprises 105 residues: MRIKKGDLVEVISGKDKGKRGKVLRVIPKENKVIVENVNMVKRHQRPVPQLREGGIIEREAPIYASKVMVVCPACDKRTRVGYRFTEDGKKVRYCKKCGEIIDKD.

It belongs to the universal ribosomal protein uL24 family. As to quaternary structure, part of the 50S ribosomal subunit.

Functionally, one of two assembly initiator proteins, it binds directly to the 5'-end of the 23S rRNA, where it nucleates assembly of the 50S subunit. One of the proteins that surrounds the polypeptide exit tunnel on the outside of the subunit. This Thermotoga maritima (strain ATCC 43589 / DSM 3109 / JCM 10099 / NBRC 100826 / MSB8) protein is Large ribosomal subunit protein uL24.